The primary structure comprises 113 residues: Flagellar hook-basal body complex protein FliE (113 aa).

It belongs to the FliE family.

It is found in the bacterial flagellum basal body. The protein is Flagellar hook-basal body complex protein FliE of Rhizobium etli (strain ATCC 51251 / DSM 11541 / JCM 21823 / NBRC 15573 / CFN 42).